Consider the following 1154-residue polypeptide: Serine-aspartate repeat-containing protein E (1154 aa).

The first 52 residues, 1 to 52 (MINRDNKKAITKKGMISNRLNKFSIRKYTVGTASILVGTTLIFGLGNQEAKA), serve as a signal peptide directing secretion. The YSIRK-G/S signaling motif motif lies at 23-34 (FSIRKYTVGTAS). The ligand binding A region stretch occupies residues 53–606 (AENTSTENAK…GDGTVKPEEK (554 aa)). The segment at 54–230 (ENTSTENAKQ…SKEELKNNPE (177 aa)) is disordered. A compositionally biased stretch (basic and acidic residues) spans 61 to 75 (AKQDDATTSDNKEVV). Residues 77–90 (ETENNSTTENNSTN) are compositionally biased toward low complexity. Basic and acidic residues predominate over residues 92–108 (IKKETNTDSQPEAKKES). The span at 118–129 (NNVTATTETKPQ) shows a compositional bias: polar residues. The segment covering 130–145 (NIEKENVKPSTDKTAT) has biased composition (basic and acidic residues). Positions 166–178 (TTKPSTSEPSTSE) are enriched in low complexity. Residues 179–212 (IQTKPTTPQESTNIENSQPQPTPSKVDNQVTDAT) are compositionally biased toward polar residues. Residues 221–230 (SKEELKNNPE) are compositionally biased toward basic and acidic residues. CNA-B domains lie at 607 to 719 (LYKI…YKEP), 720 to 829 (KYNL…YKTP), and 830 to 940 (KYSL…EEDT). Positions 904 to 1129 (VTNTTEDDKD…TGSENNGSNN (226 aa)) are disordered. Composition is skewed to acidic residues over residues 908–918 (TEDDKDADGGE) and 935–1093 (YFEE…DSDS). Residues 1117–1121 (LPETG) carry the LPXTG sorting signal motif. A Pentaglycyl murein peptidoglycan amidated threonine modification is found at threonine 1120. Residues 1121-1154 (GSENNGSNNATLFGGLFAALGSLLLFGRRKKQNK) constitute a propeptide, removed by sortase.

The protein belongs to the serine-aspartate repeat-containing protein (SDr) family. Interacts with host complement factor H/CFAH (via C-terminus). Interacts with host complement regulator C4BPA.

The protein resides in the secreted. The protein localises to the cell wall. Functionally, cell surface-associated calcium-binding protein which plays an important role in adhesion and pathogenesis. Contributes to the resistance to killing by innate immune components in blood and thus attenuates bacterial clearance by interacting with host complement factor H/CFAH and modulating its activity. Also inhibits bacterial opsonization and killing by interacting with host complement regulator C4BPA and thus inhibiting classical complement pathway activation. The polypeptide is Serine-aspartate repeat-containing protein E (sdrE) (Staphylococcus aureus (strain USA300)).